Reading from the N-terminus, the 492-residue chain is Excitatory amino acid transporter (492 aa).

Topologically, residues 1–7 (MVSWIRK) are cytoplasmic. A run of 3 helical transmembrane segments spans residues 8-28 (NLLLVLTVSSVVLGALCGFLL), 47-67 (LLMHMLKMMILPLIMSSLISG), and 85-105 (TYYMFTTAVAVVTGIFLVLVI). Topologically, residues 106–191 (HPGDPTIKKE…VKASVEYTSG (86 aa)) are extracellular. N-linked (GlcNAc...) asparagine glycosylation is found at Asn166 and Asn176. The next 5 helical transmembrane spans lie at 192-212 (MNVLGVIVFCIAIGISLSQLG), 228-248 (VIMKLVMTVMWYSPFGILCLI), 270-290 (VTVLSGLAIHSLISLPLIFFV), 358-378 (AVAAIFIAQINGVHLSFGQVV), and 389-409 (IGAASVPSAGLVTMLLVLTAV).

The protein belongs to the dicarboxylate/amino acid:cation symporter (DAACS) (TC 2.A.23) family.

It is found in the membrane. In terms of biological role, transports L-glutamate and also L- and D-aspartate. Essential for terminating the postsynaptic action of glutamate by rapidly removing released glutamate from the synaptic cleft. Acts as a symport by cotransporting sodium. The protein is Excitatory amino acid transporter (GLT-1) of Onchocerca volvulus.